The following is a 264-amino-acid chain: Type II iodothyronine deiodinase (264 aa).

Over 1–7 the chain is Lumenal; it reads MGLLSVD. The chain crosses the membrane as a helical; Signal-anchor for type III membrane protein span at residues 8 to 28; sequence LLITLQILPGFFSNCLFLALY. Residues 29 to 264 are Cytoplasmic-facing; the sequence is DSVVLVKHVL…AESGQTGTEK (236 aa). Residue Sec124 is part of the active site. Residue Sec124 is a non-standard amino acid, selenocysteine.

This sequence belongs to the iodothyronine deiodinase family. Predominantly monomer. Can form homodimers but homodimerization is not essential for enzyme activity. In terms of tissue distribution, high levels seen in the metamorphosing tail.

It localises to the endoplasmic reticulum membrane. It catalyses the reaction 3,3',5-triiodo-L-thyronine + iodide + A + H(+) = L-thyroxine + AH2. It carries out the reaction 3,3'-diiodo-L-thyronine + iodide + A + H(+) = 3,3',5'-triiodo-L-thyronine + AH2. The enzyme catalyses 3'-iodo-L-thyronine + iodide + A + H(+) = 3',5'-diiodo-L-thyronine + AH2. The catalysed reaction is 3,3'-diiodothyronamine + iodide + A + H(+) = 3,3',5'-triiodothyronamine + AH2. It catalyses the reaction 3'-iodothyronamine + iodide + A + H(+) = 3',5'-diiodothyronamine + AH2. Not inhibited by N(6)-propylthiouracil. In terms of biological role, plays a crucial role in the metabolism of thyroid hormones (TH) and has specific roles in TH activation and inactivation by deiodination. Catalyzes the deiodination of L-thyroxine (T4) to 3,5,3'-triiodothyronine (T3) and 3',5'-diiodothyronine (3',5'-T2) to 3'-monoiodothyronine (3'-T1) via outer-ring deiodination (ORD). Catalyzes the deiodination of 3,3',5'-triiodothyronine (rT3) to 3,3'-diiodothyronine (3,3'-T2) via ORD. Catalyzes the phenolic ring deiodinations of 3,3',5'-triiodothyronamine and 3',5'- diiodothyronamine. This is Type II iodothyronine deiodinase (dio2) from Aquarana catesbeiana (American bullfrog).